A 190-amino-acid chain; its full sequence is RNA pyrophosphohydrolase (190 aa).

Residues 6–149 (GYRPNVGIVL…KRGVYARALC (144 aa)) enclose the Nudix hydrolase domain. Positions 38–59 (GGMHSDETPVEAMYRELNEETG) match the Nudix box motif.

The protein belongs to the Nudix hydrolase family. RppH subfamily. The cofactor is a divalent metal cation.

In terms of biological role, accelerates the degradation of transcripts by removing pyrophosphate from the 5'-end of triphosphorylated RNA, leading to a more labile monophosphorylated state that can stimulate subsequent ribonuclease cleavage. In Xylella fastidiosa (strain 9a5c), this protein is RNA pyrophosphohydrolase.